Here is a 150-residue protein sequence, read N- to C-terminus: Globin (150 aa).

The Globin domain occupies P11–Y150. Heme b-binding residues include H74 and H106.

This sequence belongs to the globin family. In terms of assembly, monomer.

This Lampetra fluviatilis (European river lamprey) protein is Globin.